Consider the following 290-residue polypeptide: Fat storage-inducing transmembrane protein 1 (290 aa).

At 1-18 the chain is on the lumenal side; that stretch reads MERGPVVGAGLGARARIR. Residues 19–39 form a helical membrane-spanning segment; that stretch reads TLLGCLVKVLLWVASALLYFG. At 40–54 the chain is on the cytoplasmic side; sequence SEQAARLLGSPCLRR. The chain crosses the membrane as a helical span at residues 55-75; sequence LYHAWLAAVVIFGPLLQFHVN. Over 76–94 the chain is Lumenal; it reads PRTIFASHGNFFNIKFVNS. A helical transmembrane segment spans residues 95-115; sequence AWGWTCTFLGGFVLLVVFLAT. The Cytoplasmic segment spans residues 116 to 141; that stretch reads RRVAVTARHLSRLVVGAAVWRGAGRA. Residues 142 to 162 traverse the membrane as a helical segment; sequence FLLIEDLTGSCFEPLPQGLLL. The Lumenal segment spans residues 163–187; it reads HELPDRRSRLAAGHQWRGYTVSSHT. H186 is an active-site residue. Residues 188-208 traverse the membrane as a helical segment; it reads FLLTFCCLLMAEEAAVFAKYL. The Cytoplasmic portion of the chain corresponds to 209–220; sequence AHGLPAGAPLRL. Residues 221–241 traverse the membrane as a helical segment; sequence VFLLNVLLLGLWNFLLLCTVI. Over 242-249 the chain is Lumenal; sequence YFHQYTHK. H244 is an active-site residue. The chain crosses the membrane as a helical span at residues 250–270; it reads VVGAAVGTFAWYLTYGSWYHQ. The Cytoplasmic portion of the chain corresponds to 271 to 290; that stretch reads PWSPGSPGHGLFTHPSRKHN.

Belongs to the FIT family. FIT1 subfamily.

It localises to the endoplasmic reticulum membrane. In terms of biological role, plays an important role in the formation of lipid droplets (LDs) which are storage organelles at the center of lipid and energy homeostasis. Directly binds to diacylglycerol (DAGs) and triacylglycerol. The protein is Fat storage-inducing transmembrane protein 1 of Sus scrofa (Pig).